The following is a 688-amino-acid chain: ATP-dependent RNA helicase ded1 (688 aa).

2 stretches are compositionally biased toward polar residues: residues 1–15 (MADQLSSGMGNLSID) and 55–67 (GLNNSAWAGNNNY). The segment at 1–170 (MADQLSSGMG…TPDDPSKQHT (170 aa)) is disordered. The segment covering 88–102 (GFEGQQGAGWGGPRP) has biased composition (gly residues). The segment covering 103 to 114 (QGGFNPNAYRGN) has biased composition (low complexity). Over residues 115 to 129 (AGAGAGAGAGGGGGS) the composition is skewed to gly residues. The Q motif signature appears at 194–222 (LTFSNPPLDNHLISNIQLARYNVPTPVQK). Residues 225 to 416 (IPIVMGGRDL…RDFLKDYIFL (192 aa)) form the Helicase ATP-binding domain. 238-245 (AQTGSGKT) serves as a coordination point for ATP. The DEAD box signature appears at 360–363 (DEAD). A Helicase C-terminal domain is found at 427 to 587 (NITQKVEYVE…EVPAFLETIA (161 aa)). The disordered stretch occupies residues 590-615 (SSFGGGRGGRGGGRGGGRGRTQTADY). A compositionally biased stretch (gly residues) spans 592–608 (FGGGRGGRGGGRGGGRG).

The protein belongs to the DEAD box helicase family. DDX3/DED1 subfamily.

It is found in the cytoplasm. It catalyses the reaction ATP + H2O = ADP + phosphate + H(+). ATP-binding RNA helicase involved in translation initiation. Remodels RNA in response to ADP and ATP concentrations by facilitating disruption, but also formation of RNA duplexes. In Neurospora crassa (strain ATCC 24698 / 74-OR23-1A / CBS 708.71 / DSM 1257 / FGSC 987), this protein is ATP-dependent RNA helicase ded1 (drh-9).